The chain runs to 151 residues: Nucleoside diphosphate kinase (151 aa).

Residues lysine 9, phenylalanine 57, arginine 85, threonine 91, arginine 102, and asparagine 112 each coordinate ATP. Residue histidine 115 is the Pros-phosphohistidine intermediate of the active site.

This sequence belongs to the NDK family. Mg(2+) serves as cofactor.

Its subcellular location is the cytoplasm. It carries out the reaction a 2'-deoxyribonucleoside 5'-diphosphate + ATP = a 2'-deoxyribonucleoside 5'-triphosphate + ADP. The enzyme catalyses a ribonucleoside 5'-diphosphate + ATP = a ribonucleoside 5'-triphosphate + ADP. Functionally, major role in the synthesis of nucleoside triphosphates other than ATP. The ATP gamma phosphate is transferred to the NDP beta phosphate via a ping-pong mechanism, using a phosphorylated active-site intermediate. In Archaeoglobus fulgidus (strain ATCC 49558 / DSM 4304 / JCM 9628 / NBRC 100126 / VC-16), this protein is Nucleoside diphosphate kinase.